We begin with the raw amino-acid sequence, 117 residues long: Large ribosomal subunit protein uL18 (117 aa).

Belongs to the universal ribosomal protein uL18 family. Part of the 50S ribosomal subunit; part of the 5S rRNA/L5/L18/L25 subcomplex. Contacts the 5S and 23S rRNAs.

Its function is as follows. This is one of the proteins that bind and probably mediate the attachment of the 5S RNA into the large ribosomal subunit, where it forms part of the central protuberance. The sequence is that of Large ribosomal subunit protein uL18 from Idiomarina loihiensis (strain ATCC BAA-735 / DSM 15497 / L2-TR).